The following is a 95-amino-acid chain: Immunogenic miracidial antigen 8C (95 aa).

Residues 1-15 show a composition bias toward polar residues; sequence EFTISFSSPVISTGQ. The disordered stretch occupies residues 1-95; sequence EFTISFSSPV…PKKYGSGHKY (95 aa). Over residues 20 to 41 the composition is skewed to acidic residues; that stretch reads GDEDYHDGDDDVDYTDDVDDVD. The span at 45 to 59 shows a compositional bias: polar residues; it reads GSPSQLLQGGYQRNQ.

This sequence belongs to the immunogenic miracidial antigen family.

The chain is Immunogenic miracidial antigen 8C (8C) from Schistosoma japonicum (Blood fluke).